Reading from the N-terminus, the 302-residue chain is MSVPDVAVVKAFLIDLQNRICAGLQALDGQATFAADSWTRAEGGGGTSRVLTQGAVFEQAGVNFSHVTGAAMPASATAHRPELAGRSFEAMGVSLVIHPNNPYIPTTHANVRFFIAQKEGADPVWWFGGGFDLTPYYPFEEDVREWHQTSKDICAPFGDEVYPKYKKWCDEYFFLPHRNETRGVGGLFFDDLNQDGFEQSFSFMQAVGNGFLTAYAPIVERRKETEFGERERQFQLYRRGRYVEFNLVYDRGTLFGLQTGGRTESILMSMPPLVRWQYAYTPEAGSPEADLYDNYLKPRDWV.

Ser94 is a substrate binding site. Residues His98 and His108 each contribute to the a divalent metal cation site. His108 serves as the catalytic Proton donor. Residue 110 to 112 (NVR) coordinates substrate. 2 residues coordinate a divalent metal cation: His147 and His177. Residues 242 to 277 (YVEFNLVYDRGTLFGLQTGGRTESILMSMPPLVRWQ) are important for dimerization. Residue 260–262 (GGR) coordinates substrate.

It belongs to the aerobic coproporphyrinogen-III oxidase family. In terms of assembly, homodimer. A divalent metal cation is required as a cofactor.

Its subcellular location is the cytoplasm. It carries out the reaction coproporphyrinogen III + O2 + 2 H(+) = protoporphyrinogen IX + 2 CO2 + 2 H2O. It functions in the pathway porphyrin-containing compound metabolism; protoporphyrin-IX biosynthesis; protoporphyrinogen-IX from coproporphyrinogen-III (O2 route): step 1/1. Its function is as follows. Involved in the heme biosynthesis. Catalyzes the aerobic oxidative decarboxylation of propionate groups of rings A and B of coproporphyrinogen-III to yield the vinyl groups in protoporphyrinogen-IX. This Shewanella putrefaciens (strain CN-32 / ATCC BAA-453) protein is Oxygen-dependent coproporphyrinogen-III oxidase.